Reading from the N-terminus, the 260-residue chain is Putative ATP-binding protein BruAb2_1123 (260 aa).

Residues Ile-5–Ile-228 form the ABC transporter domain. Residue Gly-37–Ser-44 participates in ATP binding.

This sequence belongs to the ABC transporter superfamily. The complex is composed of two ATP-binding proteins (BruAb2_1123), two transmembrane proteins (BruAb2_1124) and a solute-binding protein (BruAb2_1122).

Its subcellular location is the cell inner membrane. Its function is as follows. Probably part of an ABC transporter complex. Probably Responsible for energy coupling to the transport system. This Brucella abortus biovar 1 (strain 9-941) protein is Putative ATP-binding protein BruAb2_1123.